The primary structure comprises 948 residues: Translation initiation factor IF-2 (948 aa).

Disordered stretches follow at residues 61–120 (IQAN…PALI), 162–243 (KSRE…TQSA), and 255–285 (QEKDKQEAKKAKKPSKPKATPTAKNNKSHKI). Positions 68–78 (KNPEQDNKDDL) are enriched in basic and acidic residues. Positions 173-189 (SNTNNANSTNNANNVNN) are enriched in low complexity. The span at 190–207 (AKKEISEVKKQEQEIKRH) shows a compositional bias: basic and acidic residues. Basic residues predominate over residues 208–219 (ENIKRRTGFRVI). The span at 230–243 (ENSVAESKKPTQSA) shows a compositional bias: polar residues. The 170-residue stretch at 447 to 616 (ERPPVVTIMG…LIQADIMELK (170 aa)) folds into the tr-type G domain. Residues 456–463 (GHVDHGKT) form a G1 region. 456–463 (GHVDHGKT) serves as a coordination point for GTP. The tract at residues 481 to 485 (GITQH) is G2. Positions 502–505 (DTPG) are G3. Residues 502 to 506 (DTPGH) and 556 to 559 (NKMD) contribute to the GTP site. The interval 556–559 (NKMD) is G4. A G5 region spans residues 592–594 (SAK).

This sequence belongs to the TRAFAC class translation factor GTPase superfamily. Classic translation factor GTPase family. IF-2 subfamily.

It localises to the cytoplasm. In terms of biological role, one of the essential components for the initiation of protein synthesis. Protects formylmethionyl-tRNA from spontaneous hydrolysis and promotes its binding to the 30S ribosomal subunits. Also involved in the hydrolysis of GTP during the formation of the 70S ribosomal complex. The protein is Translation initiation factor IF-2 of Helicobacter pylori (strain Shi470).